A 523-amino-acid chain; its full sequence is Glycerate kinase (523 aa).

Phosphoserine is present on S60. Position 200 is an N6-acetyllysine (K200).

The protein belongs to the glycerate kinase type-2 family. As to expression, expressed in the hippocampus, callus, brain, cerebellum, renal cortex interstitial cells, epithelium of interlobular bile duct and skeletal muscle.

It is found in the cytoplasm. It carries out the reaction (R)-glycerate + ATP = (2R)-3-phosphoglycerate + ADP + H(+). The protein is Glycerate kinase (Glyctk) of Mus musculus (Mouse).